The sequence spans 224 residues: MAAAVPQRAWTVEQLRSEQLPKKDIIKFLQEHGSDSFLAEHKLLGNIKNVAKTANKDHLVTAYNHLFETKRFKGTESISKVSEQVKNVKLNEDKPKETKSEETLDEGPPKYTKSVLKKGDKTNFPKKGDVVHCWYTGTLQDGTVFDTNIQTSAKKKKNAKPLSFKVGVGKVIRGWDEALLTMSKGEKARLEIEPEWAYGKKGQPDAKIPPNAKLTFEVELVDID.

The residue at position 2 (A2) is an N-acetylalanine. Residue S36 is modified to Phosphoserine. Residues 89-102 show a composition bias toward basic and acidic residues; sequence KLNEDKPKETKSEE. Residues 89-111 form a disordered region; the sequence is KLNEDKPKETKSEETLDEGPPKY. Position 99 is an N6-acetyllysine (K99). The region spanning 128-224 is the PPIase FKBP-type domain; it reads GDVVHCWYTG…TFEVELVDID (97 aa). S152 carries the post-translational modification Phosphoserine. An N6-acetyllysine modification is found at K170.

The protein belongs to the FKBP-type PPIase family.

Its subcellular location is the nucleus. It catalyses the reaction [protein]-peptidylproline (omega=180) = [protein]-peptidylproline (omega=0). Inhibited preferentially by rapamycin over FK506. FK506- and rapamycin-binding proteins (FKBPs) constitute a family of receptors for the two immunosuppressants which inhibit T-cell proliferation by arresting two distinct cytoplasmic signal transmission pathways. PPIases accelerate the folding of proteins. In Homo sapiens (Human), this protein is Peptidyl-prolyl cis-trans isomerase FKBP3 (FKBP3).